The following is a 224-amino-acid chain: Putative endoglucanase X (224 aa).

Positions 147–168 (QTQPTPSPSPTPTDSPLVKKGD) are disordered. Residues 162-224 (PLVKKGDVNL…SILKRILLRN (63 aa)) enclose the Dockerin domain.

It carries out the reaction Endohydrolysis of (1-&gt;4)-beta-D-glucosidic linkages in cellulose, lichenin and cereal beta-D-glucans.. Its function is as follows. This enzyme catalyzes the endohydrolysis of 1,4-beta-glucosidic linkages in cellulose, lichenin and cereal beta-D-glucans. The protein is Putative endoglucanase X (celX) of Acetivibrio thermocellus (Hungateiclostridium thermocellum).